The chain runs to 154 residues: Low molecular weight protein-tyrosine-phosphatase PtpA (154 aa).

C8 functions as the Nucleophile in the catalytic mechanism. R14 is a catalytic residue. Residue D120 is the Proton donor of the active site.

This sequence belongs to the low molecular weight phosphotyrosine protein phosphatase family. As to quaternary structure, interacts with host CORO1A. In terms of processing, phosphorylations at Tyr-122 and Tyr-123 are essential for phosphatase activity.

The protein resides in the secreted. The enzyme catalyses O-phospho-L-tyrosyl-[protein] + H2O = L-tyrosyl-[protein] + phosphate. Its function is as follows. Secreted tyrosine phosphatase that plays a critical role during infection as a bacterial effector protein that counteracts host defenses. Required for intramacrophage survival. The chain is Low molecular weight protein-tyrosine-phosphatase PtpA (ptpA) from Staphylococcus aureus (strain MRSA252).